Consider the following 206-residue polypeptide: Large ribosomal subunit protein uL3 (206 aa).

Residues 116–149 are disordered; sequence GFQGAIKRHNQSRGPMSHGSRYHRRPGSMGPVAP.

This sequence belongs to the universal ribosomal protein uL3 family. Part of the 50S ribosomal subunit. Forms a cluster with proteins L14 and L19.

One of the primary rRNA binding proteins, it binds directly near the 3'-end of the 23S rRNA, where it nucleates assembly of the 50S subunit. The sequence is that of Large ribosomal subunit protein uL3 from Shouchella clausii (strain KSM-K16) (Alkalihalobacillus clausii).